A 252-amino-acid chain; its full sequence is MSAVKRISVSKYKTFMFDIEGTTTPIVFVAENLFPYIRKSLKTHIEETWESEETKKDVLSLKEQAEQDANSQSDFKDAPQINIDSQQSVIDNVVYNMDKDRKMTALKQLQGHMWRSGYESGNILGEVYDDAFDFFERIKKQGKNIYIYSSGSVQAQKLLFQYSTHGNLLPYFVDHFDTSNIGNKLEKSSYVKILERTGIPNSDILFLTDNIGEAIAAREAGIDSVLSVRPGTMKLPEDHTFEAVTSFEHLEF.

Mg(2+) is bound by residues Asp-18 and Glu-20. Residues 149 to 150 (SS) and Lys-184 each bind substrate. Asp-209 is a binding site for Mg(2+).

This sequence belongs to the HAD-like hydrolase superfamily. MasA/MtnC family. Monomer. Requires Mg(2+) as cofactor.

Its subcellular location is the cytoplasm. The protein resides in the nucleus. It catalyses the reaction 5-methylsulfanyl-2,3-dioxopentyl phosphate + H2O = 1,2-dihydroxy-5-(methylsulfanyl)pent-1-en-3-one + phosphate. The protein operates within amino-acid biosynthesis; L-methionine biosynthesis via salvage pathway; L-methionine from S-methyl-5-thio-alpha-D-ribose 1-phosphate: step 3/6. Its pathway is amino-acid biosynthesis; L-methionine biosynthesis via salvage pathway; L-methionine from S-methyl-5-thio-alpha-D-ribose 1-phosphate: step 4/6. Bifunctional enzyme that catalyzes the enolization of 2,3-diketo-5-methylthiopentyl-1-phosphate (DK-MTP-1-P) into the intermediate 2-hydroxy-3-keto-5-methylthiopentenyl-1-phosphate (HK-MTPenyl-1-P), which is then dephosphorylated to form the acireductone 1,2-dihydroxy-3-keto-5-methylthiopentene (DHK-MTPene). The sequence is that of Enolase-phosphatase E1 from Naegleria gruberi (Amoeba).